The primary structure comprises 432 residues: Peptidase B (432 aa).

Mn(2+) is bound by residues Lys196 and Asp201. Lys208 is a catalytic residue. The Mn(2+) site is built by Asp219, Asp278, and Glu280. The active site involves Arg282.

This sequence belongs to the peptidase M17 family. In terms of assembly, homohexamer. The cofactor is Mn(2+).

The protein localises to the cytoplasm. It catalyses the reaction Release of an N-terminal amino acid, Xaa, from a peptide or arylamide. Xaa is preferably Glu or Asp but may be other amino acids, including Leu, Met, His, Cys and Gln.. Its function is as follows. Probably plays an important role in intracellular peptide degradation. In Yersinia pestis bv. Antiqua (strain Antiqua), this protein is Peptidase B.